Consider the following 120-residue polypeptide: Aspartate 1-decarboxylase (120 aa).

The active-site Schiff-base intermediate with substrate; via pyruvic acid is the Ser25. At Ser25 the chain carries Pyruvic acid (Ser). Thr57 contributes to the substrate binding site. Tyr58 serves as the catalytic Proton donor. 73 to 75 contacts substrate; the sequence is GAA.

This sequence belongs to the PanD family. As to quaternary structure, heterooctamer of four alpha and four beta subunits. Pyruvate serves as cofactor. In terms of processing, is synthesized initially as an inactive proenzyme, which is activated by self-cleavage at a specific serine bond to produce a beta-subunit with a hydroxyl group at its C-terminus and an alpha-subunit with a pyruvoyl group at its N-terminus.

The protein resides in the cytoplasm. It catalyses the reaction L-aspartate + H(+) = beta-alanine + CO2. The protein operates within cofactor biosynthesis; (R)-pantothenate biosynthesis; beta-alanine from L-aspartate: step 1/1. In terms of biological role, catalyzes the pyruvoyl-dependent decarboxylation of aspartate to produce beta-alanine. This chain is Aspartate 1-decarboxylase, found in Ralstonia nicotianae (strain ATCC BAA-1114 / GMI1000) (Ralstonia solanacearum).